Here is a 484-residue protein sequence, read N- to C-terminus: Protein nucleotidyltransferase YdiU (484 aa).

Residues Gly-92, Gly-94, Arg-95, Lys-115, Asp-127, Gly-128, Arg-178, and Arg-185 each coordinate ATP. Asp-258 (proton acceptor) is an active-site residue. Mg(2+)-binding residues include Asn-259 and Asp-268. Residue Asp-268 participates in ATP binding.

This sequence belongs to the SELO family. Requires Mg(2+) as cofactor. The cofactor is Mn(2+).

It catalyses the reaction L-seryl-[protein] + ATP = 3-O-(5'-adenylyl)-L-seryl-[protein] + diphosphate. The catalysed reaction is L-threonyl-[protein] + ATP = 3-O-(5'-adenylyl)-L-threonyl-[protein] + diphosphate. The enzyme catalyses L-tyrosyl-[protein] + ATP = O-(5'-adenylyl)-L-tyrosyl-[protein] + diphosphate. It carries out the reaction L-histidyl-[protein] + UTP = N(tele)-(5'-uridylyl)-L-histidyl-[protein] + diphosphate. It catalyses the reaction L-seryl-[protein] + UTP = O-(5'-uridylyl)-L-seryl-[protein] + diphosphate. The catalysed reaction is L-tyrosyl-[protein] + UTP = O-(5'-uridylyl)-L-tyrosyl-[protein] + diphosphate. Functionally, nucleotidyltransferase involved in the post-translational modification of proteins. It can catalyze the addition of adenosine monophosphate (AMP) or uridine monophosphate (UMP) to a protein, resulting in modifications known as AMPylation and UMPylation. The protein is Protein nucleotidyltransferase YdiU of Mycolicibacterium smegmatis (strain ATCC 700084 / mc(2)155) (Mycobacterium smegmatis).